The sequence spans 164 residues: MSTQLASNIYAPLYAPFFGFAGCAAAMVLSCLGAAIGTAKSGIGIAGIGTFKPELIMKSLIPVVMSGILAIYGLVVAVLIAGNLSPTEDYTLFNGFMHLSCGLCVGFACLSSGYAIGMVGDVGVRKYMHQPRLFVGIVLILIFSEVLGLYGMIVALILNTRGSE.

Topologically, residues 1–14 (MSTQLASNIYAPLY) are vacuolar. Residues 15-37 (APFFGFAGCAAAMVLSCLGAAIG) form a helical membrane-spanning segment. Residues 38 to 59 (TAKSGIGIAGIGTFKPELIMKS) lie on the Cytoplasmic side of the membrane. The helical transmembrane segment at 60–80 (LIPVVMSGILAIYGLVVAVLI) threads the bilayer. Over 81 to 98 (AGNLSPTEDYTLFNGFMH) the chain is Vacuolar. A helical transmembrane segment spans residues 99–120 (LSCGLCVGFACLSSGYAIGMVG). Topologically, residues 121-132 (DVGVRKYMHQPR) are cytoplasmic. A helical membrane pass occupies residues 133-158 (LFVGIVLILIFSEVLGLYGMIVALIL). Over 159–164 (NTRGSE) the chain is Vacuolar.

It belongs to the V-ATPase proteolipid subunit family. As to quaternary structure, V-ATPase is a heteromultimeric enzyme composed of a peripheral catalytic V1 complex (components A to H) attached to an integral membrane V0 proton pore complex (components: a, c, c', c'', d, e, f and VOA1). The decameric c-ring forms the proton-conducting pore, and is composed of eight proteolipid subunits c, one subunit c' and one subunit c''.

It is found in the vacuole membrane. In terms of biological role, proton-conducting pore forming subunit of the V0 complex of vacuolar(H+)-ATPase (V-ATPase), a multisubunit enzyme composed of a peripheral complex (V1) that hydrolyzes ATP and a membrane integral complex (V0) that translocates protons. V-ATPase is responsible for acidifying and maintaining the pH of intracellular compartments. This chain is V-type proton ATPase subunit c' (VMA11), found in Saccharomyces cerevisiae (strain ATCC 204508 / S288c) (Baker's yeast).